The sequence spans 108 residues: DNA-directed RNA polymerase subunit omega (108 aa).

It belongs to the RNA polymerase subunit omega family. In terms of assembly, the RNAP catalytic core consists of 2 alpha, 1 beta, 1 beta' and 1 omega subunit. When a sigma factor is associated with the core the holoenzyme is formed, which can initiate transcription.

It carries out the reaction RNA(n) + a ribonucleoside 5'-triphosphate = RNA(n+1) + diphosphate. Promotes RNA polymerase assembly. Latches the N- and C-terminal regions of the beta' subunit thereby facilitating its interaction with the beta and alpha subunits. The chain is DNA-directed RNA polymerase subunit omega from Mycolicibacterium paratuberculosis (strain ATCC BAA-968 / K-10) (Mycobacterium paratuberculosis).